Consider the following 295-residue polypeptide: Pyridoxal 5'-phosphate synthase subunit PdxS (295 aa).

A D-ribose 5-phosphate-binding site is contributed by Asp25. The active-site Schiff-base intermediate with D-ribose 5-phosphate is Lys82. Residue Gly154 participates in D-ribose 5-phosphate binding. Position 166 (Arg166) interacts with D-glyceraldehyde 3-phosphate. D-ribose 5-phosphate is bound by residues Gly215 and 236–237 (GS).

It belongs to the PdxS/SNZ family. As to quaternary structure, in the presence of PdxT, forms a dodecamer of heterodimers.

It carries out the reaction aldehydo-D-ribose 5-phosphate + D-glyceraldehyde 3-phosphate + L-glutamine = pyridoxal 5'-phosphate + L-glutamate + phosphate + 3 H2O + H(+). It functions in the pathway cofactor biosynthesis; pyridoxal 5'-phosphate biosynthesis. Its function is as follows. Catalyzes the formation of pyridoxal 5'-phosphate from ribose 5-phosphate (RBP), glyceraldehyde 3-phosphate (G3P) and ammonia. The ammonia is provided by the PdxT subunit. Can also use ribulose 5-phosphate and dihydroxyacetone phosphate as substrates, resulting from enzyme-catalyzed isomerization of RBP and G3P, respectively. The protein is Pyridoxal 5'-phosphate synthase subunit PdxS of Staphylococcus saprophyticus subsp. saprophyticus (strain ATCC 15305 / DSM 20229 / NCIMB 8711 / NCTC 7292 / S-41).